The following is a 391-amino-acid chain: Succinate--CoA ligase [ADP-forming] subunit beta (391 aa).

The 229-residue stretch at 9-237 folds into the ATP-grasp domain; it reads RDLFEKHGVP…RATTDPLELR (229 aa). Residues Lys46, 53-55, Ala95, and Glu100 contribute to the ATP site; that span reads GRG. 2 residues coordinate Mg(2+): Asn192 and Asp206. Substrate-binding positions include Asn257 and 320-322; that span reads GIT.

It belongs to the succinate/malate CoA ligase beta subunit family. As to quaternary structure, heterotetramer of two alpha and two beta subunits. Requires Mg(2+) as cofactor.

It carries out the reaction succinate + ATP + CoA = succinyl-CoA + ADP + phosphate. The catalysed reaction is GTP + succinate + CoA = succinyl-CoA + GDP + phosphate. It functions in the pathway carbohydrate metabolism; tricarboxylic acid cycle; succinate from succinyl-CoA (ligase route): step 1/1. Succinyl-CoA synthetase functions in the citric acid cycle (TCA), coupling the hydrolysis of succinyl-CoA to the synthesis of either ATP or GTP and thus represents the only step of substrate-level phosphorylation in the TCA. The beta subunit provides nucleotide specificity of the enzyme and binds the substrate succinate, while the binding sites for coenzyme A and phosphate are found in the alpha subunit. The protein is Succinate--CoA ligase [ADP-forming] subunit beta of Cutibacterium acnes (strain DSM 16379 / KPA171202) (Propionibacterium acnes).